A 549-amino-acid chain; its full sequence is Cation/acetate symporter ActP (549 aa).

13 helical membrane passes run 33-53 (WQAIIMFLIFVLLTLYITYWA), 76-96 (GLAIAGDFMSAASFLGISALV), 103-123 (GLIYSLGFLVGWPIILFLIAE), 149-169 (LSACGSLVVVALYLIAQMVGA), 183-203 (IAVVLVGVLMVMYVLFGGMLA), 206-226 (WVQIIKAVLLLFGASFMAFMV), 262-282 (ISALSLGLGLMFGTAGLPHIL), 303-323 (GFMGYFYILTFIIGFGAIMLV), 355-375 (LFLGFISAVAFATILAVVAGL), 404-424 (VSKITVLILGVVAILLGILFE), 428-448 (IAFMVGLAFSIAASCNFPIIL), 463-483 (IGGWLGLLTAVILMVLGPTIW), and 493-513 (IFPYEYPALFSIAVAFIGIWF).

This sequence belongs to the sodium:solute symporter (SSF) (TC 2.A.21) family.

The protein resides in the cell inner membrane. Transports acetate. The polypeptide is Cation/acetate symporter ActP (Enterobacter sp. (strain 638)).